Consider the following 89-residue polypeptide: Small ribosomal subunit protein uS15 (89 aa).

The segment covering 1–21 (MALSKEQKTETLKEFGLHETD) has biased composition (basic and acidic residues). Residues 1–22 (MALSKEQKTETLKEFGLHETDT) form a disordered region.

The protein belongs to the universal ribosomal protein uS15 family. As to quaternary structure, part of the 30S ribosomal subunit. Forms a bridge to the 50S subunit in the 70S ribosome, contacting the 23S rRNA.

Functionally, one of the primary rRNA binding proteins, it binds directly to 16S rRNA where it helps nucleate assembly of the platform of the 30S subunit by binding and bridging several RNA helices of the 16S rRNA. Its function is as follows. Forms an intersubunit bridge (bridge B4) with the 23S rRNA of the 50S subunit in the ribosome. This Corynebacterium jeikeium (strain K411) protein is Small ribosomal subunit protein uS15.